We begin with the raw amino-acid sequence, 371 residues long: Phospho-N-acetylmuramoyl-pentapeptide-transferase (371 aa).

11 consecutive transmembrane segments (helical) span residues 21 to 41 (NHILVLFGLISITCVFSDFYY), 46 to 66 (LTIPFIITTLVSSIITFIGIP), 92 to 112 (PTMGGIFFIPIGIIVSNILYF), 119 to 139 (IILTLSFVIIFFMFIGFIDDF), 156 to 176 (ILLQSLISLIFILICASNNLI), 182 to 202 (IANKVFNIGNLIYPLGIFVLL), 216 to 236 (GLLSGCSVLIFTGLAISILIE), 241 to 261 (NSTLAPLCIAMAGACMGFLFL), 268 to 288 (LFMGDSGSLAIGASLGGIALI), 296 to 316 (LIMGGILAAESISVIIQVSIF), and 349 to 369 (IVSSFWLITLFLVIINLIFLI).

The protein belongs to the glycosyltransferase 4 family. MraY subfamily. It depends on Mg(2+) as a cofactor.

It localises to the cell inner membrane. It carries out the reaction UDP-N-acetyl-alpha-D-muramoyl-L-alanyl-gamma-D-glutamyl-meso-2,6-diaminopimeloyl-D-alanyl-D-alanine + di-trans,octa-cis-undecaprenyl phosphate = di-trans,octa-cis-undecaprenyl diphospho-N-acetyl-alpha-D-muramoyl-L-alanyl-D-glutamyl-meso-2,6-diaminopimeloyl-D-alanyl-D-alanine + UMP. Its pathway is cell wall biogenesis; peptidoglycan biosynthesis. In terms of biological role, catalyzes the initial step of the lipid cycle reactions in the biosynthesis of the cell wall peptidoglycan: transfers peptidoglycan precursor phospho-MurNAc-pentapeptide from UDP-MurNAc-pentapeptide onto the lipid carrier undecaprenyl phosphate, yielding undecaprenyl-pyrophosphoryl-MurNAc-pentapeptide, known as lipid I. The polypeptide is Phospho-N-acetylmuramoyl-pentapeptide-transferase (Prochlorococcus marinus (strain NATL2A)).